The following is a 209-amino-acid chain: ATP phosphoribosyltransferase (209 aa).

It belongs to the ATP phosphoribosyltransferase family. Short subfamily. Heteromultimer composed of HisG and HisZ subunits.

Its subcellular location is the cytoplasm. The enzyme catalyses 1-(5-phospho-beta-D-ribosyl)-ATP + diphosphate = 5-phospho-alpha-D-ribose 1-diphosphate + ATP. The protein operates within amino-acid biosynthesis; L-histidine biosynthesis; L-histidine from 5-phospho-alpha-D-ribose 1-diphosphate: step 1/9. Its function is as follows. Catalyzes the condensation of ATP and 5-phosphoribose 1-diphosphate to form N'-(5'-phosphoribosyl)-ATP (PR-ATP). Has a crucial role in the pathway because the rate of histidine biosynthesis seems to be controlled primarily by regulation of HisG enzymatic activity. This is ATP phosphoribosyltransferase from Caldicellulosiruptor saccharolyticus (strain ATCC 43494 / DSM 8903 / Tp8T 6331).